Consider the following 507-residue polypeptide: Probable serine/threonine-protein kinase DDB_G0268078 (507 aa).

The Protein kinase domain occupies 4-286; it reads YQFIKQVGDG…PLQALQHRYF (283 aa). Residues 10–18 and lysine 33 each bind ATP; that span reads VGDGAYGDV. The active-site Proton acceptor is the aspartate 125. The segment covering 323-347 has biased composition (low complexity); the sequence is NYSNNNNNNNLNSNSENLNNVNKNN. Disordered regions lie at residues 323 to 364, 381 to 404, and 428 to 507; these read NYSN…PKNS, NVNN…KLDS, and QQPP…NSKL. Polar residues predominate over residues 348–361; that stretch reads QQPHSPQKIQTPKP. Residues 381–399 show a composition bias toward low complexity; the sequence is NVNNNNNNYNSNTTSGYYN. Residues 429–450 show a composition bias toward pro residues; sequence QPPPQSQPPQSQPPPQSQPPPI. Positions 451 to 470 are enriched in low complexity; it reads LTQQQQQQQQQQQQQQQLPS. Composition is skewed to polar residues over residues 471 to 481 and 491 to 507; these read KTTIYHNTNHL and RGIS…NSKL.

It belongs to the protein kinase superfamily. CMGC Ser/Thr protein kinase family. CDC2/CDKX subfamily.

It carries out the reaction L-seryl-[protein] + ATP = O-phospho-L-seryl-[protein] + ADP + H(+). The catalysed reaction is L-threonyl-[protein] + ATP = O-phospho-L-threonyl-[protein] + ADP + H(+). The sequence is that of Probable serine/threonine-protein kinase DDB_G0268078 from Dictyostelium discoideum (Social amoeba).